Reading from the N-terminus, the 775-residue chain is Hepatocyte growth factor-regulated tyrosine kinase substrate (775 aa).

The region spanning 15–143 (ATSQLLLETD…IMKVEGHVFP (129 aa)) is the VHS domain. An FYVE-type zinc finger spans residues 160–220 (WVDAEECHRC…VCEPCYEQLN (61 aa)). The Zn(2+) site is built by Cys-166, Cys-169, Cys-182, Cys-185, Cys-190, and Cys-193. Lys-207 carries the N6-acetyllysine modification. The Zn(2+) site is built by Cys-212 and Cys-215. Tyr-216 is modified (phosphotyrosine). The disordered stretch occupies residues 223 to 319 (AEGKASSTTE…SPVNSSAPLA (97 aa)). The tract at residues 225–541 (GKASSTTELP…QRLQEQEKER (317 aa)) is interaction with SNX1. In terms of domain architecture, UIM spans 258–277 (QEEEELQLALALSQSEAEEK). Positions 307-316 (LYSSPVNSSA) are enriched in polar residues. Phosphotyrosine occurs at positions 308, 329, and 334. The tract at residues 338–405 (KQEEARKSPT…NGESEESHEQ (68 aa)) is disordered. The interaction with SNAP25 and TRAK2 stretch occupies residues 443-541 (SINTMHPQLL…QRLQEQEKER (99 aa)). The interaction with STAM stretch occupies residues 452-570 (LELLNQLDER…FPLPYAQLQA (119 aa)). The interaction with NF2 stretch occupies residues 478-775 (ARGALSALRE…GSEAQLISFD (298 aa)). An N6-succinyllysine modification is found at Lys-549. Over residues 640-657 (PGAQAAPQAQAGPTTSPA) the composition is skewed to low complexity. 2 disordered regions span residues 640–690 (PGAQ…PQTS) and 719–775 (QDAS…ISFD). A compositionally biased stretch (polar residues) spans 658 to 690 (YSSYQPTPTPGYQSVASQAPQSLPAISQPPQTS). The span at 744-761 (TGPPQQQPPVAQPAPTQG) shows a compositional bias: pro residues.

In terms of assembly, component of the ESCRT-0 complex composed of STAM or STAM2 and HGS. Part of a complex at least composed of HSG, STAM2 (or probably STAM) and EPS15. Interacts with STAM. Interacts with STAM2. Interacts with EPS15; the interaction is direct, calcium-dependent and inhibited by SNAP25. Identified in a complex with STAM and LITAF. Found in a complex with STAM and E3 ligase ITCH and DTX3L. Interacts with E3 ligase DTX3L; the interaction brings together STAM and HSG, promotes their recruitment to early endosomes and decreases STAM and HGS ubiquitination by ITCH. Interacts with NF2; the interaction is direct. Interacts with ubiquitin; the interaction is direct. Interacts with VPS37C. Interacts with SMAD1, SMAD2 and SMAD3. Interacts with TSG101; the interaction mediates the association with the ESCRT-I complex. Interacts with SNAP25; the interaction is direct and decreases with addition of increasing concentrations of free calcium. Interacts with SNX1; the interaction is direct. Component of a 550 kDa membrane complex at least composed of HGS and SNX1 but excluding EGFR. Interacts with TRAK1. Interacts with TRAK2. Component of the CART complex, at least composed of ACTN4, HGS/HRS, MYO5B and TRIM3. Interacts with ARRDC3. Identified in a complex containing at least ARRDC4, AVPR2 and HGS. Interacts (via UIM domain) with UBQLN1 (via ubiquitin-like domain). Interacts with LAPTM4B; promotes HGS ubiquitination. Phosphorylated on Tyr-334. This phosphorylation occurs in response to EGF. A minor site of phosphorylation on Tyr-329 is detected. Protein phosphorylation may also be triggered in response to IL-2, GM-CSF and HGF. Post-translationally, ubiquitinated by ITCH. Ubiquitous expression in adult and fetal tissues with higher expression in testis.

Its subcellular location is the cytoplasm. The protein localises to the early endosome membrane. The protein resides in the endosome. It localises to the multivesicular body membrane. In terms of biological role, involved in intracellular signal transduction mediated by cytokines and growth factors. When associated with STAM, it suppresses DNA signaling upon stimulation by IL-2 and GM-CSF. Could be a direct effector of PI3-kinase in vesicular pathway via early endosomes and may regulate trafficking to early and late endosomes by recruiting clathrin. May concentrate ubiquitinated receptors within clathrin-coated regions. Involved in down-regulation of receptor tyrosine kinase via multivesicular body (MVBs) when complexed with STAM (ESCRT-0 complex). The ESCRT-0 complex binds ubiquitin and acts as a sorting machinery that recognizes ubiquitinated receptors and transfers them to further sequential lysosomal sorting/trafficking processes. May contribute to the efficient recruitment of SMADs to the activin receptor complex. Involved in receptor recycling via its association with the CART complex, a multiprotein complex required for efficient transferrin receptor recycling but not for EGFR degradation. The chain is Hepatocyte growth factor-regulated tyrosine kinase substrate (Hgs) from Mus musculus (Mouse).